The chain runs to 870 residues: DNA mismatch repair protein MutS (870 aa).

629–636 (GPNMGGKS) serves as a coordination point for ATP.

This sequence belongs to the DNA mismatch repair MutS family.

Its function is as follows. This protein is involved in the repair of mismatches in DNA. It is possible that it carries out the mismatch recognition step. This protein has a weak ATPase activity. In Polaromonas naphthalenivorans (strain CJ2), this protein is DNA mismatch repair protein MutS.